The chain runs to 490 residues: MNYFNTLNFTQKINQINKCRFMKKEEFNKKNDILKNKNIVIVGCGAQGLNQGLNMRDAGLNISYALKKNSIANKNQSWINAIENNFKVDDYDALIPDADLVINLTPDKQHHSVIKKLQKLMKKNAVLGYSHGFNIVEFGEKIRKDITVIMVAPKCPGTEVREEYKRGFGVPTLIAVHHENDINKIGLEVAKAWAFSTGGHRAGVLESSFIAEVKSDLMGEQTILCGMLQTASLLCYEKLITEKCNPAYSAKLIQNGWETITESLKHGGITLMMDRLSNSSKIRAYKLSKEIKKILSPLFQKHMDDIISGEFSNEMMKDWENQDLKLLNWRYKTKNTSFETAPVYNEKIPEQEYYDHGILMIAILKSGIELSFEKMIETGIKEESAYYESLHELPLIANTIARKKLYEMNKVISDTAEYGSYLFSESAYPILKEFISTLNKSDLGCALSHQSVNNIELYRINQKIQNHPIEIIGCTLRNYMKKMKAITVAK.

Residues 16-207 (INKCRFMKKE…GGHRAGVLES (192 aa)) enclose the KARI N-terminal Rossmann domain. Residues 44–47 (CGAQ), Lys-67, Ser-77, and 107–109 (DKQ) contribute to the NADP(+) site. His-131 is a catalytic residue. Gly-157 contacts NADP(+). 2 KARI C-terminal knotted domains span residues 208 to 343 (SFIA…TAPV) and 344 to 483 (YNEK…MKKM). Residues Asp-216, Glu-220, Glu-388, and Glu-392 each coordinate Mg(2+). Ser-413 lines the substrate pocket.

This sequence belongs to the ketol-acid reductoisomerase family. It depends on Mg(2+) as a cofactor.

The catalysed reaction is (2R)-2,3-dihydroxy-3-methylbutanoate + NADP(+) = (2S)-2-acetolactate + NADPH + H(+). The enzyme catalyses (2R,3R)-2,3-dihydroxy-3-methylpentanoate + NADP(+) = (S)-2-ethyl-2-hydroxy-3-oxobutanoate + NADPH + H(+). It participates in amino-acid biosynthesis; L-isoleucine biosynthesis; L-isoleucine from 2-oxobutanoate: step 2/4. It functions in the pathway amino-acid biosynthesis; L-valine biosynthesis; L-valine from pyruvate: step 2/4. Its function is as follows. Involved in the biosynthesis of branched-chain amino acids (BCAA). Catalyzes an alkyl-migration followed by a ketol-acid reduction of (S)-2-acetolactate (S2AL) to yield (R)-2,3-dihydroxy-isovalerate. In the isomerase reaction, S2AL is rearranged via a Mg-dependent methyl migration to produce 3-hydroxy-3-methyl-2-ketobutyrate (HMKB). In the reductase reaction, this 2-ketoacid undergoes a metal-dependent reduction by NADPH to yield (R)-2,3-dihydroxy-isovalerate. The polypeptide is Ketol-acid reductoisomerase (NADP(+)) (Buchnera aphidicola subsp. Acyrthosiphon pisum (strain 5A)).